The sequence spans 362 residues: Probable dual-specificity RNA methyltransferase RlmN (362 aa).

Catalysis depends on Glu-105, which acts as the Proton acceptor. Positions 111 to 344 (HEYGNSICVT…VTIRREQGHD (234 aa)) constitute a Radical SAM core domain. Cysteines 118 and 349 form a disulfide. Residues Cys-125, Cys-129, and Cys-132 each contribute to the [4Fe-4S] cluster site. Residues 175-176 (GE), Ser-207, 230-232 (SLH), and Asn-306 each bind S-adenosyl-L-methionine. Cys-349 functions as the S-methylcysteine intermediate in the catalytic mechanism.

It belongs to the radical SAM superfamily. RlmN family. It depends on [4Fe-4S] cluster as a cofactor.

It is found in the cytoplasm. It catalyses the reaction adenosine(2503) in 23S rRNA + 2 reduced [2Fe-2S]-[ferredoxin] + 2 S-adenosyl-L-methionine = 2-methyladenosine(2503) in 23S rRNA + 5'-deoxyadenosine + L-methionine + 2 oxidized [2Fe-2S]-[ferredoxin] + S-adenosyl-L-homocysteine. It carries out the reaction adenosine(37) in tRNA + 2 reduced [2Fe-2S]-[ferredoxin] + 2 S-adenosyl-L-methionine = 2-methyladenosine(37) in tRNA + 5'-deoxyadenosine + L-methionine + 2 oxidized [2Fe-2S]-[ferredoxin] + S-adenosyl-L-homocysteine. Specifically methylates position 2 of adenine 2503 in 23S rRNA and position 2 of adenine 37 in tRNAs. This Bacillus anthracis (strain CDC 684 / NRRL 3495) protein is Probable dual-specificity RNA methyltransferase RlmN.